The chain runs to 335 residues: Endo-beta-N-acetylglucosaminidase F2 (335 aa).

An N-terminal signal peptide occupies residues 1 to 45; the sequence is MKTANFSFALCLSVVIMLFIKCTRSEQDLSVTKDAIAQKSGVTVS. Residues 61-321 enclose the GH18 domain; the sequence is QISAGYYRTW…SSNDNTLRAP (261 aa). Residues serine 73, serine 89, and serine 143 are each glycosylated (O-linked (Man...) serine). The Proton donor role is filled by glutamate 171.

Belongs to the glycosyl hydrolase 18 family. In terms of assembly, monomer. Post-translationally, carbohydrates at Ser-73, Ser-89 and Ser-143 consist of (2-OMe)Man1-4GlcNAcU1-4GlcU1-4Glc1-4(2-OMe)GlcU1-4[(2-OMe)Rham1-2]Man.

It is found in the secreted. It catalyses the reaction an N(4)-(oligosaccharide-(1-&gt;3)-[oligosaccharide-(1-&gt;6)]-beta-D-Man-(1-&gt;4)-beta-D-GlcNAc-(1-&gt;4)-alpha-D-GlcNAc)-L-asparaginyl-[protein] + H2O = an oligosaccharide-(1-&gt;3)-[oligosaccharide-(1-&gt;6)]-beta-D-Man-(1-&gt;4)-D-GlcNAc + N(4)-(N-acetyl-beta-D-glucosaminyl)-L-asparaginyl-[protein]. Endohydrolysis of the di-N-acetylchitobiosyl unit in high-mannose glycopeptides and glycoproteins. Complex biantennary glycans are the preferred substrates. Tri- and tetraantennary glycans are not hydrolyzed, and high mannose glycans are very poor substrates. In Elizabethkingia meningoseptica (Chryseobacterium meningosepticum), this protein is Endo-beta-N-acetylglucosaminidase F2 (endOF2).